The primary structure comprises 273 residues: GTP cyclohydrolase MptA (273 aa).

This sequence belongs to the GTP cyclohydrolase IV family. As to quaternary structure, homodimer. It depends on Fe(2+) as a cofactor.

The enzyme catalyses GTP + H2O = 7,8-dihydroneopterin 2',3'-cyclic phosphate + formate + diphosphate + H(+). It participates in cofactor biosynthesis; 5,6,7,8-tetrahydromethanopterin biosynthesis. Functionally, converts GTP to 7,8-dihydro-D-neopterin 2',3'-cyclic phosphate, the first intermediate in the biosynthesis of coenzyme methanopterin. The polypeptide is GTP cyclohydrolase MptA (Picrophilus torridus (strain ATCC 700027 / DSM 9790 / JCM 10055 / NBRC 100828 / KAW 2/3)).